The following is a 525-amino-acid chain: GMP synthase [glutamine-hydrolyzing] (525 aa).

The Glutamine amidotransferase type-1 domain occupies 9 to 207 (RVLILDFGSQ…VLEIAGCEPL (199 aa)). Cysteine 86 functions as the Nucleophile in the catalytic mechanism. Catalysis depends on residues histidine 181 and glutamate 183. The GMPS ATP-PPase domain maps to 208-400 (WTPANIVEDA…LGLPYDMVYR (193 aa)). 235 to 241 (SGGVDSS) lines the ATP pocket.

Homodimer.

It carries out the reaction XMP + L-glutamine + ATP + H2O = GMP + L-glutamate + AMP + diphosphate + 2 H(+). The protein operates within purine metabolism; GMP biosynthesis; GMP from XMP (L-Gln route): step 1/1. Catalyzes the synthesis of GMP from XMP. The sequence is that of GMP synthase [glutamine-hydrolyzing] from Teredinibacter turnerae (strain ATCC 39867 / T7901).